We begin with the raw amino-acid sequence, 164 residues long: MKTYRRQIREKILQALYTLELRDTDIDSAAGWLLTPEILADPKAMKFFNLLLGNIKEHMEEIDRYIAAHTFNWDMSRIAIIDKNILRMAMAELLYCDDIPPKVSINEAIEIAKKFSSTDKSSKFVNGILDAIFNALKEEGKINKNGRGLIDHTPPRAAKTDAKS.

Residues 144 to 164 (KNGRGLIDHTPPRAAKTDAKS) form a disordered region. Residues 149–164 (LIDHTPPRAAKTDAKS) show a composition bias toward basic and acidic residues.

The protein belongs to the NusB family.

In terms of biological role, involved in transcription antitermination. Required for transcription of ribosomal RNA (rRNA) genes. Binds specifically to the boxA antiterminator sequence of the ribosomal RNA (rrn) operons. This is Transcription antitermination protein NusB from Chlorobium phaeovibrioides (strain DSM 265 / 1930) (Prosthecochloris vibrioformis (strain DSM 265)).